The primary structure comprises 327 residues: Flap endonuclease 1 (327 aa).

An N-domain region spans residues 1-100 (MGNADLRQLA…DEIADRREQR (100 aa)). Mg(2+) is bound by residues Asp-28, Asp-82, Glu-154, Glu-156, Asp-176, Asp-178, and Asp-226. Positions 118-247 (EAARLDARTQ…TALDAIGEHG (130 aa)) are I-domain. The interaction with PCNA stretch occupies residues 319–327 (AQTGLDRWT).

It belongs to the XPG/RAD2 endonuclease family. FEN1 subfamily. As to quaternary structure, interacts with PCNA. PCNA stimulates the nuclease activity without altering cleavage specificity. Requires Mg(2+) as cofactor.

Structure-specific nuclease with 5'-flap endonuclease and 5'-3' exonuclease activities involved in DNA replication and repair. During DNA replication, cleaves the 5'-overhanging flap structure that is generated by displacement synthesis when DNA polymerase encounters the 5'-end of a downstream Okazaki fragment. Binds the unpaired 3'-DNA end and kinks the DNA to facilitate 5' cleavage specificity. Cleaves one nucleotide into the double-stranded DNA from the junction in flap DNA, leaving a nick for ligation. Also involved in the base excision repair (BER) pathway. Acts as a genome stabilization factor that prevents flaps from equilibrating into structures that lead to duplications and deletions. Also possesses 5'-3' exonuclease activity on nicked or gapped double-stranded DNA. The protein is Flap endonuclease 1 of Halobacterium salinarum (strain ATCC 29341 / DSM 671 / R1).